A 168-amino-acid polypeptide reads, in one-letter code: Pathogenesis-related protein 1C (168 aa).

Positions 1–30 (MEFVLFSQMSSFFLVSTLLLFLIISHSCHA) are cleaved as a signal peptide. The 119-residue stretch at 38–156 (LDAHNTARAD…NGGYIVSCNY (119 aa)) folds into the SCP domain.

This sequence belongs to the CRISP family. In terms of processing, three disulfide bonds are present.

The protein resides in the vacuole. In terms of biological role, probably involved in the defense reaction of plants against pathogens. The protein is Pathogenesis-related protein 1C of Nicotiana tabacum (Common tobacco).